Here is a 149-residue protein sequence, read N- to C-terminus: Calmodulin (149 aa).

Ala-2 carries the N-acetylalanine modification. 4 EF-hand domains span residues 8 to 43, 44 to 79, 81 to 116, and 117 to 149; these read EQIAEFKEAFSLFDKDGDGCITTKELGTVMRSLGQN, PTEAELQDMINEVDADGNGTIDFPEFLNLMARKMKD, DSEEELKEAFRVFDKDQNGFISAAELRHVMTNLGEK, and LTDEEVDEMIREADVDGDGQINYEEFVKVMMAK. Ca(2+) contacts are provided by Asp-21, Asp-23, Asp-25, Cys-27, Glu-32, Asp-57, Asp-59, Asn-61, Thr-63, Glu-68, Asp-94, Asp-96, Asn-98, and Glu-105. Position 116 is an N6,N6,N6-trimethyllysine (Lys-116). Ca(2+) is bound by residues Asp-130, Asp-132, Asp-134, Gln-136, and Glu-141.

This sequence belongs to the calmodulin family. Post-translationally, the N-terminus is blocked.

Functionally, calmodulin mediates the control of a large number of enzymes, ion channels and other proteins by Ca(2+). Among the enzymes to be stimulated by the calmodulin-Ca(2+) complex are a number of protein kinases and phosphatases. This chain is Calmodulin, found in Spinacia oleracea (Spinach).